The sequence spans 339 residues: Anthranilate phosphoribosyltransferase (339 aa).

Residues G79, 82–83, S87, 89–92, 107–115, and A119 contribute to the 5-phospho-alpha-D-ribose 1-diphosphate site; these read GD, NIST, and KHGNRAASS. G79 contacts anthranilate. A Mg(2+)-binding site is contributed by S91. N110 contacts anthranilate. Anthranilate is bound at residue R165. The Mg(2+) site is built by D224 and E225.

This sequence belongs to the anthranilate phosphoribosyltransferase family. In terms of assembly, homodimer. Mg(2+) serves as cofactor.

The enzyme catalyses N-(5-phospho-beta-D-ribosyl)anthranilate + diphosphate = 5-phospho-alpha-D-ribose 1-diphosphate + anthranilate. Its pathway is amino-acid biosynthesis; L-tryptophan biosynthesis; L-tryptophan from chorismate: step 2/5. Functionally, catalyzes the transfer of the phosphoribosyl group of 5-phosphorylribose-1-pyrophosphate (PRPP) to anthranilate to yield N-(5'-phosphoribosyl)-anthranilate (PRA). In Lactiplantibacillus plantarum (strain ATCC BAA-793 / NCIMB 8826 / WCFS1) (Lactobacillus plantarum), this protein is Anthranilate phosphoribosyltransferase.